Here is a 498-residue protein sequence, read N- to C-terminus: Trichoplein keratin filament-binding protein (498 aa).

A coiled-coil region spans residues 11–39 (CSQQRLNQQLARQREQEARLRQQWEQNSR). Residues Lys-50 and Lys-57 each participate in a glycyl lysine isopeptide (Lys-Gly) (interchain with G-Cter in ubiquitin) cross-link. 3 coiled-coil regions span residues 66–136 (AYQR…LIAE), 163–353 (VNSW…LREE), and 380–479 (LTGR…EAET). The interval 73–498 (KEEKRRSLEA…PYGHPKIAWN (426 aa)) is interaction with keratin proteins. A disordered region spans residues 167–189 (EMQKEEKKQQEATAEQENKRYEN). The segment covering 168 to 189 (MQKEEKKQQEATAEQENKRYEN) has biased composition (basic and acidic residues). The tract at residues 259–425 (KQMEAFRQKA…RELARREKEE (167 aa)) is trichohyalin/plectin homology domain. The interval 447–498 (QAWEADQQEEEEEEEARRVEQLSDALLQQEAETMAEQGYRPKPYGHPKIAWN) is disordered.

It belongs to the TCHP family. In terms of assembly, interacts specifically with keratin proteins including, KRT5, KRT6A, KRT8, KRT14, KRT16 and KRT18. Interacts with KCTD17. Ubiquitinated. Ubiquitination by the BCR(KCTD17) E3 ubiquitin ligase complex results in proteasomal degradation, and induces ciliogenesis. In terms of tissue distribution, expressed at high levels in normal urothelial and breast epithelial cells. Also expressed in the smooth muscle and endothelial cells. Reduced expression seen in advanced bladder and breast carcinomas (at protein level). Ubiquitous. Expressed at highest levels in the heart, skeletal muscle, kidney, liver and testis.

It localises to the cytoplasm. The protein resides in the cytoskeleton. It is found in the cell membrane. The protein localises to the mitochondrion. Its subcellular location is the cell junction. It localises to the desmosome. The protein resides in the microtubule organizing center. It is found in the centrosome. Its function is as follows. Tumor suppressor which has the ability to inhibit cell growth and be pro-apoptotic during cell stress. Inhibits cell growth in bladder and prostate cancer cells by a down-regulation of HSPB1 by inhibiting its phosphorylation. May act as a 'capping' or 'branching' protein for keratin filaments in the cell periphery. May regulate K8/K18 filament and desmosome organization mainly at the apical or peripheral regions of simple epithelial cells. Is a negative regulator of ciliogenesis. The sequence is that of Trichoplein keratin filament-binding protein from Homo sapiens (Human).